The following is a 20-amino-acid chain: 2-oxo-acid reductase (20 aa).

It belongs to the AOR/FOR family. In terms of assembly, forms various types of homooligomers. The cofactor is [4Fe-4S] cluster. Mo-molybdopterin is required as a cofactor.

The protein localises to the cell membrane. The enzyme catalyses a (2R)-2-hydroxycarboxylate + A = a 2-oxocarboxylate + AH2. Is inhibited by cyanide. Is sensitive to oxygen. In terms of biological role, oxidoreductase with an extremely broad substrate specificity that can reduce reversibly 2-oxocarboxylates to (2R)-hydroxycarboxylates. The protein is 2-oxo-acid reductase of Proteus hauseri.